Consider the following 398-residue polypeptide: Enolase (398 aa).

A (2R)-2-phosphoglycerate-binding site is contributed by Gln154. Glu196 (proton donor) is an active-site residue. Residues Asp232, Glu273, and Asp300 each coordinate Mg(2+). 4 residues coordinate (2R)-2-phosphoglycerate: Lys325, Arg354, Ser355, and Lys376. Residue Lys325 is the Proton acceptor of the active site.

The protein belongs to the enolase family. Requires Mg(2+) as cofactor.

The protein resides in the cytoplasm. Its subcellular location is the secreted. The protein localises to the cell surface. The enzyme catalyses (2R)-2-phosphoglycerate = phosphoenolpyruvate + H2O. The protein operates within carbohydrate degradation; glycolysis; pyruvate from D-glyceraldehyde 3-phosphate: step 4/5. Functionally, catalyzes the reversible conversion of 2-phosphoglycerate (2-PG) into phosphoenolpyruvate (PEP). It is essential for the degradation of carbohydrates via glycolysis. This is Enolase from Halobacterium salinarum (strain ATCC 700922 / JCM 11081 / NRC-1) (Halobacterium halobium).